A 183-amino-acid chain; its full sequence is NADH-ubiquinone oxidoreductase chain 5 (183 aa).

Transmembrane regions (helical) follow at residues 7 to 27 (FMCY…GDNS), 30 to 50 (LFLG…FWFT), 111 to 131 (AITL…AQIG), and 144 to 164 (TPVS…FMIA).

Belongs to the complex I subunit 5 family.

Its subcellular location is the mitochondrion inner membrane. It carries out the reaction a ubiquinone + NADH + 5 H(+)(in) = a ubiquinol + NAD(+) + 4 H(+)(out). In terms of biological role, core subunit of the mitochondrial membrane respiratory chain NADH dehydrogenase (Complex I) that is believed to belong to the minimal assembly required for catalysis. Complex I functions in the transfer of electrons from NADH to the respiratory chain. The immediate electron acceptor for the enzyme is believed to be ubiquinone. In Pisum sativum (Garden pea), this protein is NADH-ubiquinone oxidoreductase chain 5 (NDH5).